A 4042-amino-acid polypeptide reads, in one-letter code: Polyketide synthase-nonribosomal peptide synthetase phmA (4042 aa).

The 402-residue stretch at 10–411 (NEPIAIVGSA…GANAHAILEA (402 aa)) folds into the Ketosynthase family 3 (KS3) domain. Residues 519–837 (VFTGQGAQWA…TGLLSRDRDD (319 aa)) are acyl transferase. The N-terminal hotdog fold stretch occupies residues 909–1042 (HELLGTKCPD…GRISALFGPP (134 aa)). The segment at 909–1208 (HELLGTKCPD…LHTKPLGHAT (300 aa)) is dehydratase (DH) domain. The region spanning 909 to 1210 (HELLGTKCPD…TKPLGHATPE (302 aa)) is the PKS/mFAS DH domain. Residue H941 is the Proton acceptor; for dehydratase activity of the active site. A C-terminal hotdog fold region spans residues 1057–1210 (MIDVDPEQFY…TKPLGHATPE (154 aa)). D1117 functions as the Proton donor; for dehydratase activity in the catalytic mechanism. Positions 1349–1572 (DDMLNDFYVK…VDEHVEFIRN (224 aa)) are methyltransferase (MT) domain. A ketoreductase (KR)domain region spans residues 2073 to 2246 (TYWLVGLTGG…AGSVINIGAI (174 aa)). The Carrier 1 domain occupies 2351-2433 (ATTADEVNEA…ELVSAAQEQL (83 aa)). The residue at position 2393 (S2393) is an O-(pantetheine 4'-phosphoryl)serine. Disordered stretches follow at residues 2460 to 2504 (KTET…SKDA) and 2535 to 2554 (ATRS…PEND). Over residues 2479–2490 (EVDEEEQEEDEA) the composition is skewed to acidic residues. Positions 2495–2504 (NFFSSASKDA) are enriched in polar residues. Positions 2536-2549 (TRSKTSSSSSSFTS) are enriched in low complexity. The interval 2584 to 3019 (RVSPMSFGQA…LGRPPLYDPQ (436 aa)) is condensation. The adenylation stretch occupies residues 3047-3443 (EMASRFGSQI…TADGLVLEGR (397 aa)). A Carrier 2 domain is found at 3562–3642 (KENKSPESEL…AMLNLISPAS (81 aa)). Residue S3602 is modified to O-(pantetheine 4'-phosphoryl)serine. The tract at residues 3703 to 3924 (ITGASGFLGK…DFVSVESVAH (222 aa)) is reductase-like.

This sequence belongs to the NRP synthetase family.

Its pathway is mycotoxin biosynthesis. Its function is as follows. Hybrid PKS-NRPS synthetase; part of the gene cluster that mediates the biosynthesis of the mycotoxins phomacins, leucine-derived cytochalasans with potent actin polymerization-inhibitory activities and monocot-specific antigerminative activities. The first step in the pathway is catalyzed by the hybrid PKS-NRPS phmA, assisted by the enoyl reductase phmE, that are responsible for fusion of the leucine precursor and the polyketide backbone to produce a 2-pyrrolidone intermediate. The polyketide synthase module (PKS) of phmA is responsible for the synthesis of the polyketide backbone and the downstream nonribosomal peptide synthetase (NRPS) amidates the carboxyl end of the polyketide with the leucine precursor. Because phmA lacks a designated enoylreductase (ER) domain, the required activity is provided the enoyl reductase phmE. Reduction by the hydrolyase phmG, followed by dehydration and intra-molecular Diels-Alder cyclization by the Diels-Alderase phmD then yield the required isoindolone-fused macrocycle. A number of oxidative steps catalyzed by the tailoring cytochrome P450 monooxygenase phmB, the FAD-linked oxidoreductase phmC and the short-chain dehydrogenase/reductase phmF, are further required to afford the final products, phomacin D and phomacin E. The polypeptide is Polyketide synthase-nonribosomal peptide synthetase phmA (Phaeosphaeria nodorum (strain SN15 / ATCC MYA-4574 / FGSC 10173) (Glume blotch fungus)).